A 181-amino-acid chain; its full sequence is Beta-lactoglobulin-2 (181 aa).

Residues 1-18 form the signal peptide; it reads MKCLLLALGLSLMCGNQA. Cystine bridges form between Cys84–Cys179 and Cys124–Cys138.

The protein belongs to the calycin superfamily. Lipocalin family. Monomer.

The protein localises to the secreted. Its function is as follows. Lactoglobulin is the primary component of whey, it binds retinol and is probably involved in the transport of that molecule. The polypeptide is Beta-lactoglobulin-2 (LGB2) (Equus caballus (Horse)).